Consider the following 331-residue polypeptide: tRNA-cytidine(32) 2-sulfurtransferase (331 aa).

The short motif at 73–78 is the PP-loop motif element; that stretch reads SGGKDS. [4Fe-4S] cluster is bound by residues C148, C151, and C239.

This sequence belongs to the TtcA family. In terms of assembly, homodimer. Requires Mg(2+) as cofactor. [4Fe-4S] cluster is required as a cofactor.

The protein localises to the cytoplasm. It catalyses the reaction cytidine(32) in tRNA + S-sulfanyl-L-cysteinyl-[cysteine desulfurase] + AH2 + ATP = 2-thiocytidine(32) in tRNA + L-cysteinyl-[cysteine desulfurase] + A + AMP + diphosphate + H(+). The protein operates within tRNA modification. In terms of biological role, catalyzes the ATP-dependent 2-thiolation of cytidine in position 32 of tRNA, to form 2-thiocytidine (s(2)C32). The sulfur atoms are provided by the cysteine/cysteine desulfurase (IscS) system. This chain is tRNA-cytidine(32) 2-sulfurtransferase, found in Burkholderia mallei (strain NCTC 10247).